We begin with the raw amino-acid sequence, 221 residues long: Endo-1,4-beta-xylanase 2 (221 aa).

The N-terminal stretch at 1 to 19 (MVAFTSLLAGFAAIAGVLS) is a signal peptide. A GH11 domain is found at 32–221 (QTIGPGTGYS…SSGSASITVS (190 aa)). 2 N-linked (GlcNAc...) asparagine glycosylation sites follow: Asn-69 and Asn-92. The active-site Nucleophile is Glu-117. Glu-208 serves as the catalytic Proton donor.

The protein belongs to the glycosyl hydrolase 11 (cellulase G) family.

The protein localises to the secreted. It catalyses the reaction Endohydrolysis of (1-&gt;4)-beta-D-xylosidic linkages in xylans.. It participates in glycan degradation; xylan degradation. In terms of biological role, endo-1,4-beta-xylanase involved in the hydrolysis of xylan, a major structural heterogeneous polysaccharide found in plant biomass representing the second most abundant polysaccharide in the biosphere, after cellulose. The polypeptide is Endo-1,4-beta-xylanase 2 (Xyn2) (Trichoderma harzianum (Hypocrea lixii)).